The following is a 212-amino-acid chain: ATP synthase subunit 5, mitochondrial (212 aa).

Residues M1–A17 constitute a mitochondrion transit peptide.

This sequence belongs to the ATPase delta chain family. As to quaternary structure, F-type ATPases have 2 components, CF(1) - the catalytic core - and CF(0) - the membrane proton channel. CF(1) has five subunits: alpha(3), beta(3), gamma(1), delta(1), epsilon(1). CF(0) has three main subunits: a, b and c.

It is found in the mitochondrion. Its subcellular location is the mitochondrion inner membrane. Functionally, mitochondrial membrane ATP synthase (F(1)F(0) ATP synthase or Complex V) produces ATP from ADP in the presence of a proton gradient across the membrane which is generated by electron transport complexes of the respiratory chain. F-type ATPases consist of two structural domains, F(1) - containing the extramembraneous catalytic core and F(0) - containing the membrane proton channel, linked together by a central stalk and a peripheral stalk. During catalysis, ATP synthesis in the catalytic domain of F(1) is coupled via a rotary mechanism of the central stalk subunits to proton translocation. Part of the complex F(0) domain and the peripheric stalk, which acts as a stator to hold the catalytic alpha(3)beta(3) subcomplex and subunit a/ATP6 static relative to the rotary elements. This chain is ATP synthase subunit 5, mitochondrial (ATP5), found in Saccharomyces cerevisiae (strain ATCC 204508 / S288c) (Baker's yeast).